Reading from the N-terminus, the 447-residue chain is N-succinylarginine dihydrolase (447 aa).

Substrate is bound by residues 19 to 28 (AGLSFGNEAS), Asn110, and 137 to 138 (HR). Glu174 is an active-site residue. Residue Arg212 participates in substrate binding. The active site involves His248. Residues Asp250 and Asn359 each contribute to the substrate site. Cys365 functions as the Nucleophile in the catalytic mechanism.

This sequence belongs to the succinylarginine dihydrolase family. As to quaternary structure, homodimer.

It carries out the reaction N(2)-succinyl-L-arginine + 2 H2O + 2 H(+) = N(2)-succinyl-L-ornithine + 2 NH4(+) + CO2. It functions in the pathway amino-acid degradation; L-arginine degradation via AST pathway; L-glutamate and succinate from L-arginine: step 2/5. In terms of biological role, catalyzes the hydrolysis of N(2)-succinylarginine into N(2)-succinylornithine, ammonia and CO(2). The polypeptide is N-succinylarginine dihydrolase (Salmonella typhimurium (strain LT2 / SGSC1412 / ATCC 700720)).